Consider the following 51-residue polypeptide: Large ribosomal subunit protein bL33 (51 aa).

Belongs to the bacterial ribosomal protein bL33 family.

This chain is Large ribosomal subunit protein bL33, found in Alkalilimnicola ehrlichii (strain ATCC BAA-1101 / DSM 17681 / MLHE-1).